The sequence spans 156 residues: Longistatin (156 aa).

The first 21 residues, Met1–Ala21, serve as a signal peptide directing secretion. EF-hand domains follow at residues Ser70–His105 and Asp123–Ile156. The Ca(2+) site is built by Asp83, Asp85, Asn87, Lys89, Glu94, Asp135, Asn137, Asp139, Phe141, and Glu146.

As to quaternary structure, interacts with host fibrin. Interacts with human RAGE/AGER. As to expression, saliva (at protein level). Salivary gland (at protein level). Not detected in midgut, ovary, trachea, Malpighian tubule system, synganglion and cuticle.

The protein resides in the secreted. The protein localises to the cytoplasm. Resistant to inhibition by host SERPINE1. Inhibited by PMSF, aprotinin, antipain and leupeptin. Inhibited by Zn(2+). Anticoagulant and fibrinolytic protease that modulates blood feeding of ticks on vertebrate hosts. Degrades host fibrinogen and delays fibrin clot formation. Promotes lysis of fibrin clots in the host by activating host plasminogen in the presence of soluble fibrin. Binds Ca(2+). Hydrolyzes serine protease-specific substrates. Required for the formation of a blood pool, an accumulation of blood and tissue fluid developed at the tick's feeding site. Blocks activation of host AGER/RAGE. Reduces AGER/RAGE-dependent production of reactive oxygen species (ROS) in human endothelial cells. Prevents AGER/RAGE-dependent activation of NF-kappa-B and suppresses expression of adhesion molecules, such as VCAM1, ICAM1 and SELE, and secretion of cytokines, such as CSF3/GCSF and TGF-beta, in human endothelial cells. Suppresses RAGE/AGER-mediated migration of mouse peritoneal resident cells. Reduces AGER/RAGE-mediated inflammation in mice tissues. The protein is Longistatin of Haemaphysalis longicornis (Bush tick).